The chain runs to 279 residues: Four and a half LIM domains protein 2 (279 aa).

The segment at 7-31 (CHHCEDSLFGRKYVLREEQPYCVAC) adopts a C4-type zinc-finger fold. LIM zinc-binding domains lie at 40 to 92 (CEEC…CTDC), 101 to 153 (CQEC…CVPC), and 162 to 212 (CVQC…CLGC). Residue Lys-78 forms a Glycyl lysine isopeptide (Lys-Gly) (interchain with G-Cter in SUMO2) linkage. Residues Lys-167 and Lys-220 each participate in a glycyl lysine isopeptide (Lys-Gly) (interchain with G-Cter in SUMO2) cross-link. Positions 221–275 (CAGCANPISGLGGTKYISFEERQWHNDCFNCKKCSLSLVGRGFLTERDDILCPDC) constitute an LIM zinc-binding 4 domain. A Phosphoserine modification is found at Ser-238.

As to quaternary structure, interacts with ZNF638 and TTN/titin. Interacts with E4F1. Interacts with GRB7. Interacts with SIRT1 and FOXO1. Interacts with CEFIP and calcineurin. Interacts with FOXK1.

Its subcellular location is the cytoplasm. The protein resides in the nucleus. The protein localises to the myofibril. It is found in the sarcomere. It localises to the z line. In terms of biological role, may function as a molecular transmitter linking various signaling pathways to transcriptional regulation. Negatively regulates the transcriptional repressor E4F1 and may function in cell growth. Inhibits the transcriptional activity of FOXO1 and its apoptotic function by enhancing the interaction of FOXO1 with SIRT1 and FOXO1 deacetylation. Negatively regulates the calcineurin/NFAT signaling pathway in cardiomyocytes. This is Four and a half LIM domains protein 2 (FHL2) from Bos taurus (Bovine).